A 396-amino-acid chain; its full sequence is Acetate kinase (396 aa).

Position 8 (N8) interacts with Mg(2+). K15 provides a ligand contact to ATP. R89 is a substrate binding site. D146 acts as the Proton donor/acceptor in catalysis. Residues 206–210 (HLGNG), 281–283 (DLR), and 329–333 (GIGEN) contribute to the ATP site. E382 contacts Mg(2+).

This sequence belongs to the acetokinase family. In terms of assembly, homodimer. The cofactor is Mg(2+). It depends on Mn(2+) as a cofactor.

Its subcellular location is the cytoplasm. The enzyme catalyses acetate + ATP = acetyl phosphate + ADP. Its pathway is metabolic intermediate biosynthesis; acetyl-CoA biosynthesis; acetyl-CoA from acetate: step 1/2. Catalyzes the formation of acetyl phosphate from acetate and ATP. Can also catalyze the reverse reaction. The polypeptide is Acetate kinase (Geobacillus kaustophilus (strain HTA426)).